Reading from the N-terminus, the 222-residue chain is CEACAM1-like protein UL7 (222 aa).

Residues Asn50, Asn56, Asn60, Asn71, Asn105, Asn109, Asn125, Asn132, Asn147, Asn164, Asn168, and Asn189 are each glycosylated (N-linked (GlcNAc...) asparagine; by host). The chain crosses the membrane as a helical span at residues 193–213; sequence LALVGVVVFLVLIVVCIMGWW.

It belongs to the RL11 family. Highly glycosylated.

It localises to the secreted. It is found in the host cell membrane. Its function is as follows. Plays a role in modulating the host immune response and affecting host cytokine production. Structurally and functionally homolog of host CEACAM1, induces endothelial cell angiogenesis. The chain is CEACAM1-like protein UL7 (UL7) from Homo sapiens (Human).